Reading from the N-terminus, the 105-residue chain is NADH-quinone oxidoreductase subunit K (105 aa).

The next 3 membrane-spanning stretches (helical) occupy residues 7-27, 34-54, and 66-86; these read IGVNHFLTISVLLFSLGMFAV, IVILMGVELILNAANINFLTF, and FSLFVIVLAAAEAAVALAIVI.

Belongs to the complex I subunit 4L family. In terms of assembly, NDH-1 is composed of 14 different subunits. Subunits NuoA, H, J, K, L, M, N constitute the membrane sector of the complex.

It localises to the cell inner membrane. It carries out the reaction a quinone + NADH + 5 H(+)(in) = a quinol + NAD(+) + 4 H(+)(out). Its function is as follows. NDH-1 shuttles electrons from NADH, via FMN and iron-sulfur (Fe-S) centers, to quinones in the respiratory chain. The immediate electron acceptor for the enzyme in this species is believed to be a menaquinone. Couples the redox reaction to proton translocation (for every two electrons transferred, four hydrogen ions are translocated across the cytoplasmic membrane), and thus conserves the redox energy in a proton gradient. The sequence is that of NADH-quinone oxidoreductase subunit K from Chlorobaculum parvum (strain DSM 263 / NCIMB 8327) (Chlorobium vibrioforme subsp. thiosulfatophilum).